The sequence spans 347 residues: Aurora kinase A- and ninein-interacting protein (347 aa).

Positions 182 to 347 are interaction with AURKA; sequence QREAKRKREG…DSEGNRVIRH (166 aa). The interval 273-347 is interaction with RBBP8/CtIP; the sequence is RDSWSQLFTE…DSEGNRVIRH (75 aa). Ser284 is modified (phosphoserine). The segment covering 301–322 has biased composition (polar residues); sequence VTNARNQGSGQFPDSPQAQGQD. Residues 301 to 325 are disordered; that stretch reads VTNARNQGSGQFPDSPQAQGQDGPT.

Belongs to the AUNIP family. As to quaternary structure, interacts (via C-terminus) with AURKA (via C-terminus). Interacts (via N-terminus) with NIN; this interaction blocks NIN phosphorylation by both AURKA and GSK3B. Identified in a complex with NIN and AURKA. Interacts with RBBP8/CtIP.

It localises to the nucleus. The protein resides in the chromosome. Its subcellular location is the cytoplasm. It is found in the cytoskeleton. The protein localises to the microtubule organizing center. It localises to the centrosome. The protein resides in the spindle pole. Its function is as follows. DNA-binding protein that accumulates at DNA double-strand breaks (DSBs) following DNA damage and promotes DNA resection and homologous recombination. Serves as a sensor of DNA damage: binds DNA with a strong preference for DNA substrates that mimic structures generated at stalled replication forks, and anchors RBBP8/CtIP to DSB sites to promote DNA end resection and ensuing homologous recombination repair. Inhibits non-homologous end joining (NHEJ). Required for the dynamic movement of AURKA at the centrosomes and spindle apparatus during the cell cycle. The sequence is that of Aurora kinase A- and ninein-interacting protein from Rattus norvegicus (Rat).